The sequence spans 273 residues: Undecaprenyl-diphosphatase (273 aa).

7 helical membrane passes run 6–26 (SLLIAAILGVVEGLTEFLPVS), 45–65 (AKTFEVVIQLGSILAVVVMFW), 90–110 (LTLIHILLGMIPAVVLGLLFH), 116–136 (LFNPINVMYALVVGGLLLIAA), 190–210 (YAASEFSFLLAVPMMMGATAL), 222–242 (GDISMFAVGFITAFVVALIAI), and 252–272 (ISFIPFAIYRFIVAAAVYVVF).

It belongs to the UppP family.

Its subcellular location is the cell inner membrane. The enzyme catalyses di-trans,octa-cis-undecaprenyl diphosphate + H2O = di-trans,octa-cis-undecaprenyl phosphate + phosphate + H(+). Functionally, catalyzes the dephosphorylation of undecaprenyl diphosphate (UPP). Confers resistance to bacitracin. In Shigella sonnei (strain Ss046), this protein is Undecaprenyl-diphosphatase.